Consider the following 265-residue polypeptide: MSSDLLCGSHAAPVVTQLRRHAPLVHCITNDVVQNFTANVLLALGASPAMVVDTDEAAQFAAIADALLINLGTLTRPQQQAMRAAIDSACAAGKPWTLDPVAVGALTLRTEFAQEILARRPAAIRANASEIRALTGESGGGRGVDATESAHQAREAARLLARRTGAVVAVTGEVDYITDGERTVAVEGGTAMLTRVVGTGCALSAVVAACCALPGDRLENVATACWLMKRAGEEALTVSRGPGSFASALLDNLHAQAFGGAYETH.

Met50 is a substrate binding site. ATP-binding residues include Arg125 and Thr171. Gly198 is a binding site for substrate.

This sequence belongs to the Thz kinase family. Mg(2+) serves as cofactor.

It catalyses the reaction 5-(2-hydroxyethyl)-4-methylthiazole + ATP = 4-methyl-5-(2-phosphooxyethyl)-thiazole + ADP + H(+). It functions in the pathway cofactor biosynthesis; thiamine diphosphate biosynthesis; 4-methyl-5-(2-phosphoethyl)-thiazole from 5-(2-hydroxyethyl)-4-methylthiazole: step 1/1. Its function is as follows. Catalyzes the phosphorylation of the hydroxyl group of 4-methyl-5-beta-hydroxyethylthiazole (THZ). This chain is Hydroxyethylthiazole kinase, found in Cronobacter sakazakii (strain ATCC BAA-894) (Enterobacter sakazakii).